A 247-amino-acid polypeptide reads, in one-letter code: Killer cell lectin-like receptor subfamily I member 2 (247 aa).

A compositionally biased stretch (basic and acidic residues) spans 1 to 12; it reads MPRKKQNERGTN. The tract at residues 1-39 is disordered; sequence MPRKKQNERGTNKQEIINIETKSSTFQEKQRQSKTDQIS. The Cytoplasmic segment spans residues 1–79; sequence MPRKKQNERG…GTDPWLTTWR (79 aa). The chain crosses the membrane as a helical span at residues 80–100; the sequence is IITVILGTSCIILVTKVGFLI. Residues 101–247 are Extracellular-facing; that stretch reads PNLFSRGEKR…KAYTCEFNLQ (147 aa). 4 N-linked (GlcNAc...) asparagine glycosylation sites follow: Asn125, Asn196, Asn212, and Asn218. The region spanning 139–243 is the C-type lectin domain; the sequence is FGNNFYLFFR…CSSKKAYTCE (105 aa). Cystine bridges form between Cys160/Cys242 and Cys221/Cys234.

As to quaternary structure, heterodimer with KLRE1. In terms of tissue distribution, expressed in natural killer (NK) cells.

Its subcellular location is the cell membrane. Functionally, lectin-like receptor for natural killer (NK) cells. Heterodimer formation with KLRE1 mediates NK cell cytolytic activity. In Rattus norvegicus (Rat), this protein is Killer cell lectin-like receptor subfamily I member 2.